A 315-amino-acid polypeptide reads, in one-letter code: Ankyrin repeat domain-containing protein 54 (315 aa).

Positions 1-49 (MDGSSPLLAAAGSDGDRSSSEGEYTLAGGPSAGDTEKREGESPMEAAGA) are disordered. 4 ANK repeats span residues 124–153 (HAVK…DPCA), 157–186 (KGRT…DPNQ), 190–219 (LGNT…RVDA), and 223–255 (AGRT…EVTQ).

Its subcellular location is the nucleus. The protein resides in the cytoplasm. The protein localises to the midbody. Functionally, plays an important role in regulating intracellular signaling events associated with erythroid terminal differentiation. This chain is Ankyrin repeat domain-containing protein 54 (ankrd54), found in Danio rerio (Zebrafish).